The chain runs to 369 residues: Peptide chain release factor 2 (369 aa).

Gln-251 bears the N5-methylglutamine mark.

The protein belongs to the prokaryotic/mitochondrial release factor family. Post-translationally, methylated by PrmC. Methylation increases the termination efficiency of RF2.

The protein resides in the cytoplasm. Functionally, peptide chain release factor 2 directs the termination of translation in response to the peptide chain termination codons UGA and UAA. This Acidothermus cellulolyticus (strain ATCC 43068 / DSM 8971 / 11B) protein is Peptide chain release factor 2.